The chain runs to 255 residues: Triosephosphate isomerase (255 aa).

A substrate-binding site is contributed by asparagine 9–lysine 11. Histidine 95 functions as the Electrophile in the catalytic mechanism. Catalysis depends on glutamate 167, which acts as the Proton acceptor. Substrate contacts are provided by residues glycine 173, serine 212, and glycine 233–glycine 234.

This sequence belongs to the triosephosphate isomerase family. Homodimer.

It is found in the cytoplasm. It carries out the reaction D-glyceraldehyde 3-phosphate = dihydroxyacetone phosphate. It functions in the pathway carbohydrate biosynthesis; gluconeogenesis. Its pathway is carbohydrate degradation; glycolysis; D-glyceraldehyde 3-phosphate from glycerone phosphate: step 1/1. In terms of biological role, involved in the gluconeogenesis. Catalyzes stereospecifically the conversion of dihydroxyacetone phosphate (DHAP) to D-glyceraldehyde-3-phosphate (G3P). The protein is Triosephosphate isomerase of Klebsiella pneumoniae.